We begin with the raw amino-acid sequence, 196 residues long: GTP cyclohydrolase 1 (196 aa).

Residues Cys85, His88, and Cys156 each coordinate Zn(2+).

Belongs to the GTP cyclohydrolase I family. As to quaternary structure, toroid-shaped homodecamer, composed of two pentamers of five dimers.

The enzyme catalyses GTP + H2O = 7,8-dihydroneopterin 3'-triphosphate + formate + H(+). It functions in the pathway cofactor biosynthesis; 7,8-dihydroneopterin triphosphate biosynthesis; 7,8-dihydroneopterin triphosphate from GTP: step 1/1. The chain is GTP cyclohydrolase 1 from Bacteroides thetaiotaomicron (strain ATCC 29148 / DSM 2079 / JCM 5827 / CCUG 10774 / NCTC 10582 / VPI-5482 / E50).